The chain runs to 494 residues: PTS system cellobiose-specific EIIC component (494 aa).

Residues M8–F481 enclose the PTS EIIC type-3 domain. 9 helical membrane passes run F32–V52, I92–W112, A119–L139, A188–L208, F227–I247, I274–G294, A355–F375, V406–I426, and A463–I483.

The protein resides in the cell membrane. In terms of biological role, the phosphoenolpyruvate-dependent sugar phosphotransferase system (PTS), a major carbohydrate active transport system, catalyzes the phosphorylation of incoming sugar substrates concomitant with their translocation across the cell membrane. Involved in cellobiose transport with PtcA and PtcB. This system can also transport lactose. The sequence is that of PTS system cellobiose-specific EIIC component from Lactococcus lactis subsp. lactis (strain IL1403) (Streptococcus lactis).